A 368-amino-acid chain; its full sequence is Putative F-box/kelch-repeat protein At5g02995 (368 aa).

Positions S35–I84 constitute an F-box domain. Kelch repeat units lie at residues D140–K186 and K187–G233.

The protein is Putative F-box/kelch-repeat protein At5g02995 of Arabidopsis thaliana (Mouse-ear cress).